Here is a 238-residue protein sequence, read N- to C-terminus: MGKKLLQQRAGRGGINFRSPSWRRVGPARYPNIEGDHKGKIIDILHNPGVTAPVVKVKLDNGLQFYIPAVQGVAVGQEISIGKNATISNGNIVEVGQLPEGTVICNVEKLKGDGGKFARAAGSYAVISGKAGNKVLIKLSSEKIVEVSQNARATVGIIAGGGFVEKPLLKAGNNYWKYRVRAVKWPVVRGVAMNAVSHPHGGGLHQSVSRPSTVSRNAPPGRKVGHIASRRTGRRGGA.

Residues 198–238 are disordered; sequence HPHGGGLHQSVSRPSTVSRNAPPGRKVGHIASRRTGRRGGA. Polar residues predominate over residues 206 to 216; sequence QSVSRPSTVSR. The span at 223–238 shows a compositional bias: basic residues; sequence KVGHIASRRTGRRGGA.

The protein belongs to the universal ribosomal protein uL2 family. As to quaternary structure, part of the 50S ribosomal subunit. Forms a bridge to the 30S subunit in the 70S ribosome.

Functionally, one of the primary rRNA binding proteins. Required for association of the 30S and 50S subunits to form the 70S ribosome, for tRNA binding and peptide bond formation. It has been suggested to have peptidyltransferase activity; this is somewhat controversial. Makes several contacts with the 16S rRNA in the 70S ribosome. This is Large ribosomal subunit protein uL2 from Sulfolobus acidocaldarius (strain ATCC 33909 / DSM 639 / JCM 8929 / NBRC 15157 / NCIMB 11770).